The following is a 446-amino-acid chain: GTPase Der (446 aa).

EngA-type G domains follow at residues 2-166 (TVVA…PEAP) and 179-354 (IRVS…RQYN). Residues 8–15 (GRPNVGKS), 55–59 (DTAGF), 118–121 (NKID), 185–192 (GRPNVGKS), 232–236 (DTAGI), and 297–300 (NKWD) each bind GTP. The KH-like domain maps to 355-440 (QRVTTGIVNR…PIRLIFRPRQ (86 aa)).

This sequence belongs to the TRAFAC class TrmE-Era-EngA-EngB-Septin-like GTPase superfamily. EngA (Der) GTPase family. As to quaternary structure, associates with the 50S ribosomal subunit.

In terms of biological role, GTPase that plays an essential role in the late steps of ribosome biogenesis. This is GTPase Der from Syntrophobacter fumaroxidans (strain DSM 10017 / MPOB).